Here is a 158-residue protein sequence, read N- to C-terminus: Transcriptional regulatory protein DoeX (158 aa).

Residues 3–64 (LDRYDLKILE…RLNTDVLVKR (62 aa)) enclose the HTH asnC-type domain. Positions 22 to 41 (KSKLAEAINLSVSPCWERVR) form a DNA-binding region, H-T-H motif.

It localises to the cytoplasm. Functionally, acts as a transcriptional regulator. It binds DNA specifically to a fragment from the doeA promoter region. The chain is Transcriptional regulatory protein DoeX (doeX) from Halomonas elongata (strain ATCC 33173 / DSM 2581 / NBRC 15536 / NCIMB 2198 / 1H9).